The primary structure comprises 868 residues: Monofunctional pimaradiene synthase (868 aa).

Mg(2+) is bound by residues aspartate 620, aspartate 624, asparagine 764, threonine 768, and glutamate 772.

The protein belongs to the terpene synthase family. Tpsd subfamily. Mg(2+) is required as a cofactor.

It catalyses the reaction (+)-copalyl diphosphate = (-)-pimara-8(14),15-diene + diphosphate. It participates in terpene metabolism; oleoresin biosynthesis. Involved in defensive oleoresin formation in conifers in response to insect attack or other injury. Involved in diterpene (C20) olefins biosynthesis. Monofunctional enzyme lacking the DXDD motif in the class II active site relevant for the cyclization of geranylgeranyl diphosphate (GGPP). Requires (+)-copalyl diphosphate ((+)-CPP) as substrate, but no activity with GGPP or ent-CPP. Pimaradiene is the major products of the enzyme. This is Monofunctional pimaradiene synthase from Pinus banksiana (Jack pine).